Consider the following 450-residue polypeptide: ATP-dependent protease ATPase subunit HslU (450 aa).

Residues isoleucine 18 and 60-65 each bind ATP; that span reads GVGKTE. The span at 140 to 151 shows a compositional bias: polar residues; it reads KTSSSGWAQQQE. The tract at residues 140 to 162 is disordered; that stretch reads KTSSSGWAQQQEETPENDDQRGT. Positions 263, 328, and 400 each coordinate ATP.

Belongs to the ClpX chaperone family. HslU subfamily. As to quaternary structure, a double ring-shaped homohexamer of HslV is capped on each side by a ring-shaped HslU homohexamer. The assembly of the HslU/HslV complex is dependent on binding of ATP.

It is found in the cytoplasm. Its function is as follows. ATPase subunit of a proteasome-like degradation complex; this subunit has chaperone activity. The binding of ATP and its subsequent hydrolysis by HslU are essential for unfolding of protein substrates subsequently hydrolyzed by HslV. HslU recognizes the N-terminal part of its protein substrates and unfolds these before they are guided to HslV for hydrolysis. The chain is ATP-dependent protease ATPase subunit HslU from Idiomarina loihiensis (strain ATCC BAA-735 / DSM 15497 / L2-TR).